Here is a 251-residue protein sequence, read N- to C-terminus: Cold shock-induced protein TIR2 (251 aa).

The N-terminal stretch at 1-18 (MAYIKIALLAAIAALASA) is a signal peptide. A PIR1/2/3 repeat occupies 207-225 (ASAISQISDGQVQATSTVS). Gly-231 carries the GPI-anchor amidated glycine lipid modification. The propeptide at 232–251 (AAKAVIGMGAGVMAAAAMLL) is removed in mature form.

It belongs to the SRP1/TIP1 family. In terms of processing, the GPI-anchor is attached to the protein in the endoplasmic reticulum and serves to target the protein to the cell surface. There, the glucosamine-inositol phospholipid moiety is cleaved off and the GPI-modified mannoprotein is covalently attached via its lipidless GPI glycan remnant to the 1,6-beta-glucan of the outer cell wall layer. Post-translationally, covalently linked to beta-1,3-glucan of the inner cell wall layer via an alkali-sensitive ester linkage between the gamma-carboxyl group of glutamic acids, arising from a specific glutamine within the PIR1/2/3 repeat, and hydroxyl groups of glucoses of beta-1,3-glucan chains.

It localises to the secreted. The protein localises to the cell wall. The protein resides in the membrane. Component of the cell wall. The sequence is that of Cold shock-induced protein TIR2 (TIR2) from Saccharomyces cerevisiae (strain ATCC 204508 / S288c) (Baker's yeast).